The primary structure comprises 512 residues: Endo-1,4-beta-xylanase A (512 aa).

The first 30 residues, 1-30, serve as a signal peptide directing secretion; the sequence is MKRKVKKMAAMATSIIMAIMIILHSIPVLA. A GH11 domain is found at 33–228; it reads IIYDNETGTH…SSGYANVYKN (196 aa). Glu-124 (nucleophile) is an active-site residue. Glu-215 acts as the Proton donor in catalysis. 2 CBM6 domains span residues 251–371 and 388–508; these read SIIE…FIFS and SIIQ…FVFS. Ca(2+) is bound by residues Glu-254 and Glu-256. Thr-271 serves as a coordination point for D-xylotriose. Residue Arg-276 coordinates Ca(2+). Copy 1 of the repeat occupies 279 to 340; sequence GYIENGNTVT…SSTGSWNTYQ (62 aa). Positions 279 to 477 are 2 X 61 AA approximate repeats; the sequence is GYIENGNTVT…GSTGSFDTYR (199 aa). Positions 280, 337, and 364 each coordinate D-xylotriose. Tyr-280, Asn-337, and Asn-364 together coordinate D-xylobiose. 4 residues coordinate Ca(2+): Asp-366, Gln-391, Glu-393, and Ser-413. The stretch at 416 to 477 is repeat 2; the sequence is GYIENGYSTT…GSTGSFDTYR (62 aa). 3 residues coordinate D-xylotriose: Tyr-417, Asp-474, and Asn-501. A Ca(2+)-binding site is contributed by Asp-503.

This sequence belongs to the glycosyl hydrolase 11 (cellulase G) family.

The catalysed reaction is Endohydrolysis of (1-&gt;4)-beta-D-xylosidic linkages in xylans.. It participates in glycan degradation; xylan degradation. This chain is Endo-1,4-beta-xylanase A (xynA), found in Thermoclostridium stercorarium (Clostridium stercorarium).